The following is a 332-amino-acid chain: 2,3-diketo-L-gulonate reductase (332 aa).

Catalysis depends on His-44, which acts as the Proton donor. NAD(+)-binding positions include 168-174, 224-225, and 304-306; these read ITMVDMS, WK, and GHE.

The protein belongs to the LDH2/MDH2 oxidoreductase family. DlgD subfamily. Homodimer.

Its subcellular location is the cytoplasm. The catalysed reaction is 3-dehydro-L-gulonate + NAD(+) = 2,3-dioxo-L-gulonate + NADH + H(+). It catalyses the reaction 3-dehydro-L-gulonate + NADP(+) = 2,3-dioxo-L-gulonate + NADPH + H(+). In terms of biological role, catalyzes the reduction of 2,3-diketo-L-gulonate in the presence of NADH, to form 3-keto-L-gulonate. The sequence is that of 2,3-diketo-L-gulonate reductase from Salmonella paratyphi B (strain ATCC BAA-1250 / SPB7).